The sequence spans 157 residues: Cell cycle regulator of non-homologous end joining (157 aa).

M1 is modified (N-acetylmethionine). The KBM motif lies at 1-21 (METLKSKTKTRVLPSWMTAPV). Over residues 80–91 (KPWEQRSLEATD) the composition is skewed to basic and acidic residues. Positions 80–148 (KPWEQRSLEA…EEEKEEEDAL (69 aa)) are disordered. A compositionally biased stretch (low complexity) spans 96–106 (SPPCSSSPGSS). The XLM signature appears at 147 to 157 (ALKYVREIFFS).

As to quaternary structure, interacts (via KBM motif) with XRCC5/Ku80 and XRCC6/Ku70 heterodimer. Interacts (via XLF motif) with TRIM28/KAP1, ATM, MRE11, NBN and RAD50. Interacts with splicing factor SF3B1. Interacts with ERCC6L2; this interaction is DNA independent.

It is found in the cytoplasm. Its subcellular location is the nucleus. The protein resides in the chromosome. Its function is as follows. Cell-cycle-specific regulator of classical non-homologous end joining (NHEJ) of DNA double-strand break (DSB) repair, which can act both as an activator or inhibitor of NHEJ, depending on the cell cycle phase. Acts as a regulator of DNA repair pathway choice by specifically inhibiting classical NHEJ during the S and G2 phases, thereby promoting error-free repair by homologous recombination during cell cycle phases when sister chromatids are present. Preferentially protects single-stranded overhangs at break sites by inhibiting classical NHEJ, thereby creating a local environment that favors homologous recombination. Acts via interaction with XRCC5/Ku80 and XRCC6/Ku70. In contrast, acts as an activator of NHEJ during G1 phase of the cell cycle: promotes classical NHEJ in G1 phase cells via multivalent interactions that increase the affinity of DNA damage response proteins for DSB-associated chromatin. Also involved in immunoglobulin V(D)J recombination. May also act as an indirect regulator of proteasome. This chain is Cell cycle regulator of non-homologous end joining, found in Mus musculus (Mouse).